Consider the following 58-residue polypeptide: Small ribosomal subunit protein bS21 (58 aa).

Residues 28–58 form a disordered region; sequence VLQDIRKHEHYEKPSIKKKKKSEAARKKKRF. Residues 31 to 42 show a composition bias toward basic and acidic residues; it reads DIRKHEHYEKPS. Residues 43 to 58 show a composition bias toward basic residues; sequence IKKKKKSEAARKKKRF.

The protein belongs to the bacterial ribosomal protein bS21 family.

The polypeptide is Small ribosomal subunit protein bS21 (Syntrophomonas wolfei subsp. wolfei (strain DSM 2245B / Goettingen)).